The sequence spans 249 residues: 5'-nucleotidase SurE (249 aa).

4 residues coordinate a divalent metal cation: Asp8, Asp9, Ser39, and Asn91.

The protein belongs to the SurE nucleotidase family. Requires a divalent metal cation as cofactor.

It localises to the cytoplasm. It carries out the reaction a ribonucleoside 5'-phosphate + H2O = a ribonucleoside + phosphate. In terms of biological role, nucleotidase that shows phosphatase activity on nucleoside 5'-monophosphates. In Pseudomonas fluorescens (strain SBW25), this protein is 5'-nucleotidase SurE.